Reading from the N-terminus, the 201-residue chain is 2-phospho-L-lactate guanylyltransferase (201 aa).

It belongs to the CofC family. Homodimer.

It catalyses the reaction (2S)-2-phospholactate + GTP + H(+) = (2S)-lactyl-2-diphospho-5'-guanosine + diphosphate. Its pathway is cofactor biosynthesis; coenzyme F420 biosynthesis. Guanylyltransferase that catalyzes the activation of (2S)-2-phospholactate (2-PL) as (2S)-lactyl-2-diphospho-5'-guanosine, via the condensation of 2-PL with GTP. It is involved in the biosynthesis of coenzyme F420, a hydride carrier cofactor. The chain is 2-phospho-L-lactate guanylyltransferase from Natronomonas pharaonis (strain ATCC 35678 / DSM 2160 / CIP 103997 / JCM 8858 / NBRC 14720 / NCIMB 2260 / Gabara) (Halobacterium pharaonis).